Reading from the N-terminus, the 226-residue chain is N-acetyltransferase family 8 member 2 (226 aa).

Transmembrane regions (helical) follow at residues 33 to 55 (FYHV…TIIL) and 60 to 82 (WLLA…WVSC). The region spanning 69-221 (LFLLCLRLIF…FHFTYSLPSV (153 aa)) is the N-acetyltransferase domain. The residue at position 204 (Lys204) is an N6-acetyllysine.

Belongs to the camello family.

It is found in the membrane. In terms of biological role, probable acetyltransferase. Has no detectable histone acetyltransferase activity towards histone H3 or H4. The polypeptide is N-acetyltransferase family 8 member 2 (Rattus norvegicus (Rat)).